A 314-amino-acid polypeptide reads, in one-letter code: MRPEGSLTYRVPERLRQGFCGVGRAAQALVCASAKEGTAFRMEAVQEGAAGVESEQAALGEEAVLLLDDIMAEVEVVAEVEVVAEEEGLVERREEAQRAQQAVPGPGPMTPESALEELLAVQVELEPVNAQARKAFSRQREKMERRRKPHLDRRGAVIQSVPGFWANVIANHPQMSALITDEDEDMLSYMVSLEVEEEKHPVHLCKIMLFFRSNPYFQNKVITKEYLVNITEYRASHSTPIEWYPDYEVEAYRRRHHNSSLNFFNWFSDHNFAGSNKIAEILCKDLWRNPLQYYKRMKPPEEGTETSGDSQLLS.

The protein belongs to the nucleosome assembly protein (NAP) family.

The protein resides in the cytoplasm. The protein localises to the nucleus. In terms of biological role, may be involved in sperm differentiation and proliferation. The polypeptide is Testis-specific Y-encoded protein 4 (TSPY4) (Homo sapiens (Human)).